The following is a 252-amino-acid chain: Carboxymethylenebutenolidase (252 aa).

The tract at residues 1 to 28 is disordered; sequence MCHNKSSAPPTPAHISIQQNRTPGTDPV. Catalysis depends on residues Cys-126, Asp-183, and His-214.

Belongs to the dienelactone hydrolase family.

The catalysed reaction is 2-(5-oxo-2,5-dihydrofuran-2-ylidene)acetate + H2O = 4-oxohex-2-enedioate + H(+). It functions in the pathway aromatic compound metabolism; 3-chlorocatechol degradation. In terms of biological role, ring cleavage of cyclic ester dienelactone to produce maleylacetate. The sequence is that of Carboxymethylenebutenolidase (clcD) from Rhodococcus opacus (Nocardia opaca).